We begin with the raw amino-acid sequence, 454 residues long: Probable xylan O-acetyltransferase 9 (454 aa).

Residues 1–15 lie on the Cytoplasmic side of the membrane; that stretch reads MKAPPPPSPVAKRAR. The helical; Signal-anchor for type II membrane protein transmembrane segment at 16 to 36 threads the bilayer; that stretch reads VSPFVFLLVLFLLLFSFLYGE. At 37 to 454 the chain is on the lumenal side; the sequence is DLKELLGSQA…ELLYTKLFYP (418 aa). Cystine bridges form between Cys-101–Cys-152, Cys-123–Cys-188, Cys-132–Cys-435, and Cys-352–Cys-431. The GDS motif signature appears at 175–177; that stretch reads GDS. Residue Ser-177 is the Nucleophile of the active site. Asn-219, Asn-293, and Asn-394 each carry an N-linked (GlcNAc...) asparagine glycan. Asp-430 functions as the Proton donor in the catalytic mechanism. A DXXH motif motif is present at residues 430-433; the sequence is DCVH. The active-site Proton acceptor is His-433.

This sequence belongs to the PC-esterase family. TBL subfamily.

It is found in the golgi apparatus membrane. Functionally, probable xylan acetyltransferase required for 2-O- and 3-O-monoacetylation of xylosyl residues in xylan. Possesses extremely low activity in vitro. This chain is Probable xylan O-acetyltransferase 9, found in Oryza sativa subsp. japonica (Rice).